We begin with the raw amino-acid sequence, 261 residues long: Early 39 kDa protein (261 aa).

The segment at 215-261 is disordered; that stretch reads SYVPTPVSNKKRRAPPSAPKKIAKQRRDTKPPPTYVSDNTQDTNMSE. The span at 250–261 shows a compositional bias: polar residues; it reads VSDNTQDTNMSE.

This Orgyia pseudotsugata multicapsid polyhedrosis virus (OpMNPV) protein is Early 39 kDa protein.